A 152-amino-acid chain; its full sequence is Aminoglycoside N(6')-acetyltransferase type 1 (152 aa).

An N-acetyltransferase domain is found at 5-152 (PLVRPVETTD…AQVRCFRKPL (148 aa)). Substrate-binding residues include tryptophan 26, tyrosine 73, glutamate 86, and aspartate 122. Asparagine 127 lines the acetyl-CoA pocket.

In terms of assembly, homodimer.

It carries out the reaction kanamycin B + acetyl-CoA = N(6')-acetylkanamycin B + CoA + H(+). Its function is as follows. Catalyzes the transfer of an acetyl group from acetyl-CoA to the 6'-amino group of aminoglycoside molecules conferring resistance to antibiotics containing the purpurosamine ring including amikacin. The chain is Aminoglycoside N(6')-acetyltransferase type 1 (aacA7) from Klebsiella aerogenes (Enterobacter aerogenes).